The following is a 91-amino-acid chain: Tachykinin-like peptide (91 aa).

Positions 1–19 (MKILVAFAVIMLVSAQVLA) are cleaved as a signal peptide. The propeptide occupies 20-51 (AEIGLNDEPEWYSDQIQEDLPVFENFLQRIAR). Met62 is subject to Methionine amide. The disordered stretch occupies residues 64–91 (KRNNGFGQMSRKRSAERNTIHNYERRRK). The propeptide occupies 66-91 (NNGFGQMSRKRSAERNTIHNYERRRK). Over residues 76-91 (RSAERNTIHNYERRRK) the composition is skewed to basic and acidic residues.

As to expression, expressed by the skin glands.

The protein localises to the secreted. Tachykinins are active peptides which excite neurons, evoke behavioral responses, are potent vasodilators and secretagogues, and contract (directly or indirectly) many smooth muscles. In vitro, induces contraction of guinea pig ileum smooth muscle in a dose-dependent manner. This chain is Tachykinin-like peptide, found in Theloderma corticale (Kwangsi warty tree frog).